The chain runs to 248 residues: tRNA (guanine-N(1)-)-methyltransferase (248 aa).

S-adenosyl-L-methionine is bound by residues G113 and 133–138; that span reads IGDYVL.

The protein belongs to the RNA methyltransferase TrmD family. Homodimer.

The protein localises to the cytoplasm. The enzyme catalyses guanosine(37) in tRNA + S-adenosyl-L-methionine = N(1)-methylguanosine(37) in tRNA + S-adenosyl-L-homocysteine + H(+). Specifically methylates guanosine-37 in various tRNAs. The chain is tRNA (guanine-N(1)-)-methyltransferase from Shewanella piezotolerans (strain WP3 / JCM 13877).